Reading from the N-terminus, the 217-residue chain is MRILLALTWLAWLGACTSIEQPRPDFADDDLPPIATAPAAGRSGGVFNAVTAWSLASDGRAYRPGDTLTVTLEETTQASKRADTKFGKNGDMAVKPGVLFGSTVPFDSSFGAKRNFDGGGSSSQQNTLRGEITVIVNQVLAGGLLQVKGEKVLSLNQGEEVMRLSGYVRQADIDTNNRVSSRRIANARIKYVGKGALSDSNSAGWLTRFFNSPWMPF.

The first 15 residues, 1–15 (MRILLALTWLAWLGA), serve as a signal peptide directing secretion. Cys-16 carries N-palmitoyl cysteine lipidation. Cys-16 carries the S-diacylglycerol cysteine lipid modification.

It belongs to the FlgH family. As to quaternary structure, the basal body constitutes a major portion of the flagellar organelle and consists of four rings (L,P,S, and M) mounted on a central rod.

Its subcellular location is the cell outer membrane. It is found in the bacterial flagellum basal body. In terms of biological role, assembles around the rod to form the L-ring and probably protects the motor/basal body from shearing forces during rotation. The sequence is that of Flagellar L-ring protein 2 from Burkholderia thailandensis (strain ATCC 700388 / DSM 13276 / CCUG 48851 / CIP 106301 / E264).